A 365-amino-acid polypeptide reads, in one-letter code: Green-sensitive opsin P521 (365 aa).

The Extracellular portion of the chain corresponds to 1-51 (MTEAWNVAVFAARRSRDDDDTTRGSVFTYTNTNNTRGPFEGPNYHIAPRWV). A glycan (N-linked (GlcNAc...) asparagine) is linked at N33. Residues 52–76 (YNLVSFFMIIVVIASCFTNGLVLVA) traverse the membrane as a helical segment. At 77–88 (TAKFKKLRHPLN) the chain is on the cytoplasmic side. The helical transmembrane segment at 89-113 (WILVNLAFVDLVETLVASTISVFNQ) threads the bilayer. Residues 114–128 (IFGYFILGHPLCVIE) lie on the Extracellular side of the membrane. A disulfide bond links C125 and C202. Residues 129–148 (GYVVSSCGITGLWSLAIISW) traverse the membrane as a helical segment. The Cytoplasmic portion of the chain corresponds to 149–167 (ERWFVVCKPFGNIKFDSKL). Residues 168–191 (AIIGIVFSWVWAWGWSAPPIFGWS) form a helical membrane-spanning segment. Over 192–217 (RYWPHGLKTSCGPDVFSGSVELGCQS) the chain is Extracellular. Residues 218-245 (FMLTLMITCCFLPLFIIIVCYLQVWMAI) traverse the membrane as a helical segment. Over 246 to 267 (RAVAAQQKESESTQKAEREVSR) the chain is Cytoplasmic. Residues 268–291 (MVVVMIVAFCICWGPYASFVSFAA) form a helical membrane-spanning segment. The Extracellular segment spans residues 292–299 (ANPGYAFH). Residues 300–324 (PLAAALPAYFAKSATIYNPVIYVFM) form a helical membrane-spanning segment. At K311 the chain carries N6-(retinylidene)lysine. The Cytoplasmic segment spans residues 325–365 (NRQFRNCIMQLFGKKVDDGSEASTTSRTEVSSVSNSSVAPA). Residues 342-365 (DGSEASTTSRTEVSSVSNSSVAPA) form a disordered region. The span at 345–365 (EASTTSRTEVSSVSNSSVAPA) shows a compositional bias: low complexity.

It belongs to the G-protein coupled receptor 1 family. Opsin subfamily. Post-translationally, phosphorylated on some or all of the serine and threonine residues present in the C-terminal region. In terms of tissue distribution, in this lizard the color pigments are found in the rod-shaped photoreceptor cells which have been derived from ancestral cone-like photoreceptors.

It localises to the membrane. Visual pigments are the light-absorbing molecules that mediate vision. They consist of an apoprotein, opsin, covalently linked to cis-retinal. This chain is Green-sensitive opsin P521, found in Gekko gecko (Tokay gecko).